The following is a 1443-amino-acid chain: Cleavage and polyadenylation specificity factor subunit 1 (1443 aa).

4 disordered regions span residues 404–435, 546–570, 715–777, and 901–921; these read PASA…AAGK, EEDN…DDGR, GGAR…PAPF, and FREK…AEEG. The span at 410–419 shows a compositional bias: basic and acidic residues; that stretch reads EAADKEEPPS. Phosphoserine occurs at positions 756 and 766. Residues 758 to 775 are compositionally biased toward basic and acidic residues; that stretch reads SKEEARRSSQPPADRDPA. The short motif at 893–908 is the Nuclear localization signal element; sequence KKVPHNINFREKKPKP.

The protein belongs to the CPSF1 family. As to quaternary structure, component of the cleavage and polyadenylation specificity factor (CPSF) complex, composed of CPSF1, CPSF2, CPSF3, CPSF4 and FIP1L1. Found in a complex with CPSF1, FIP1L1 and PAPOLA. Interacts with FIP1L1, TENT2/GLD2 and SRRM1. Interacts with TUT1; the interaction is direct and mediates the recruitment of the CPSF complex on the 3'UTR of selected pre-mRNAs. The N-terminus is blocked. As to expression, widely expressed, with high expression in the retina.

It localises to the nucleus. The protein resides in the nucleoplasm. Its function is as follows. Component of the cleavage and polyadenylation specificity factor (CPSF) complex that plays a key role in pre-mRNA 3'-end formation, recognizing the AAUAAA signal sequence and interacting with poly(A) polymerase and other factors to bring about cleavage and poly(A) addition. This subunit is involved in the RNA recognition step of the polyadenylation reaction. May play a role in eye morphogenesis and the development of retinal ganglion cell projections to the midbrain. The chain is Cleavage and polyadenylation specificity factor subunit 1 (CPSF1) from Homo sapiens (Human).